Consider the following 236-residue polypeptide: 2-C-methyl-D-erythritol 4-phosphate cytidylyltransferase (236 aa).

This sequence belongs to the IspD/TarI cytidylyltransferase family. IspD subfamily. Homodimer.

The enzyme catalyses 2-C-methyl-D-erythritol 4-phosphate + CTP + H(+) = 4-CDP-2-C-methyl-D-erythritol + diphosphate. It functions in the pathway isoprenoid biosynthesis; isopentenyl diphosphate biosynthesis via DXP pathway; isopentenyl diphosphate from 1-deoxy-D-xylulose 5-phosphate: step 2/6. Catalyzes the formation of 4-diphosphocytidyl-2-C-methyl-D-erythritol from CTP and 2-C-methyl-D-erythritol 4-phosphate (MEP). This chain is 2-C-methyl-D-erythritol 4-phosphate cytidylyltransferase, found in Salmonella newport (strain SL254).